Here is a 470-residue protein sequence, read N- to C-terminus: 6-phospho-beta-galactosidase (470 aa).

Positions 19, 116, 159, 160, and 297 each coordinate D-galactose 6-phosphate. Glu-160 (proton donor) is an active-site residue. The active-site Nucleophile is Glu-375. Residues Ser-430, Trp-431, Lys-437, and Tyr-439 each contribute to the D-galactose 6-phosphate site.

The protein belongs to the glycosyl hydrolase 1 family.

It catalyses the reaction a 6-phospho-beta-D-galactoside + H2O = D-galactose 6-phosphate + an alcohol. It functions in the pathway carbohydrate metabolism; lactose degradation; D-galactose 6-phosphate and beta-D-glucose from lactose 6-phosphate: step 1/1. This Staphylococcus aureus (strain COL) protein is 6-phospho-beta-galactosidase.